A 1142-amino-acid chain; its full sequence is Enamelin (1142 aa).

Positions 1–38 (MLLSCRHGASSPKLDNLVPSGKMKILLVFLGLLCYSAA) are cleaved as a signal peptide. At Ser53 the chain carries Phosphoserine. Disordered regions lie at residues 90–347 (YQMP…FYRN), 374–513 (YRRV…IIPK), 543–587 (TEGI…LSHG), and 603–662 (RENS…FPGQ). Positions 128–148 (QPQPKTPTPKQPLNEPSPTPT) are enriched in pro residues. Phosphoserine is present on residues Ser191 and Ser216. Over residues 223–234 (DFEKPKEKDPPK) the composition is skewed to basic and acidic residues. 2 stretches are compositionally biased toward polar residues: residues 243–303 (SVNT…SQSP) and 381–395 (TARS…NSAN). N-linked (GlcNAc...) asparagine glycosylation is found at Asn245, Asn252, Asn264, and Asn291. The propeptide occupies 277-514 (NPRSNPTGQN…QTQTQIIPKG (238 aa)). Residues 431–442 (PREKQVSQKERT) show a composition bias toward basic and acidic residues. Residues 453–467 (WRNSQDYGINKSNYK) show a composition bias toward polar residues. Asn462 carries an N-linked (GlcNAc...) asparagine glycan. Hydroxyproline is present on Pro547. Basic and acidic residues predominate over residues 570 to 582 (FKEDPGRQEEHLP). A propeptide spanning residues 666-669 (DMEE) is cleaved from the precursor. Over residues 787–816 (NLYKTPTSSPHQKENQPYSNNSPAGLQKNP) the composition is skewed to polar residues. Disordered stretches follow at residues 787–820 (NLYK…TWHE), 921–965 (TSIV…SQLS), and 1020–1049 (VFGT…QQRQ). An N-linked (GlcNAc...) asparagine glycan is attached at Asn929. Residues 952–965 (LRRSTPCSVKSQLS) are compositionally biased toward polar residues. Asn1040 is a glycosylation site (N-linked (GlcNAc...) asparagine).

Post-translationally, proteolytically cleaved into several smaller polypeptides. Cleavage of N-terminal region of enamelin occurs soon after secretion. Phosphorylated by FAM20C in vitro. Expressed by secretory-phase ameloblasts. Intact enamelin and large-molecular-weight enamelins are limited to the most superficial layer of the developing enamel matrix, while low-molecular-weight enamelins are observed in deeper enamelin. Preferential localization among the crystallites in rod and interrod enamel.

The protein localises to the secreted. It is found in the extracellular space. Its subcellular location is the extracellular matrix. Functionally, involved in the mineralization and structural organization of enamel. Involved in the extension of enamel during the secretory stage of dental enamel formation. The protein is Enamelin (ENAM) of Sus scrofa (Pig).